We begin with the raw amino-acid sequence, 654 residues long: Acetyl-coenzyme A synthetase (654 aa).

CoA-binding positions include 190 to 193 and threonine 313; that span reads RGGK. Residues 389 to 391, 413 to 418, aspartate 504, and arginine 519 each bind ATP; these read GEP and DTWWQT. Serine 527 contributes to the CoA binding site. Arginine 530 is a binding site for ATP. Residues valine 541 and valine 546 each contribute to the Mg(2+) site. At lysine 613 the chain carries N6-acetyllysine.

It belongs to the ATP-dependent AMP-binding enzyme family. Mg(2+) serves as cofactor. Acetylated. Deacetylation by the SIR2-homolog deacetylase activates the enzyme.

The catalysed reaction is acetate + ATP + CoA = acetyl-CoA + AMP + diphosphate. In terms of biological role, catalyzes the conversion of acetate into acetyl-CoA (AcCoA), an essential intermediate at the junction of anabolic and catabolic pathways. AcsA undergoes a two-step reaction. In the first half reaction, AcsA combines acetate with ATP to form acetyl-adenylate (AcAMP) intermediate. In the second half reaction, it can then transfer the acetyl group from AcAMP to the sulfhydryl group of CoA, forming the product AcCoA. This Leptospira borgpetersenii serovar Hardjo-bovis (strain L550) protein is Acetyl-coenzyme A synthetase.